The sequence spans 569 residues: Melanophilin (569 aa).

Residues 4–124 form the RabBD domain; the sequence is KLDLSKLTDD…MGSLEWYYGH (121 aa). Residues 58–112 form an FYVE-type zinc finger; the sequence is HLNETHCARCLQPYRLLVAPKRQCLDCHLFTCQDCSHAHPEEEGWLCDPCHLARV. Residues 143–430 are disordered; that stretch reads GRLQGGGGPE…MQPGRTTDQE (288 aa). 2 stretches are compositionally biased toward basic and acidic residues: residues 352 to 362 and 379 to 390; these read ETLKRKLEEMT and EEEAGLNRKTSI. A compositionally biased stretch (polar residues) spans 404–415; the sequence is SGQTSRQETSPR. The stretch at 431 to 465 forms a coiled coil; that stretch reads LLELEDRVAVTASEVQQVESEVSNIKSKIAALQAA. The tract at residues 490-569 is disordered; sequence GRLGQTPKDP…FAKPVMTQRP (80 aa). A compositionally biased stretch (basic and acidic residues) spans 526 to 535; it reads SQDKAGDSFD.

In terms of assembly, binds RAB27A that has been activated by GTP-binding via its N-terminus. Binds MYO5A via its C-terminal coiled coil domain.

Its subcellular location is the melanosome. Rab effector protein involved in melanosome transport. Serves as link between melanosome-bound RAB27A and the motor protein MYO5A. This Felis catus (Cat) protein is Melanophilin (MLPH).